An 874-amino-acid polypeptide reads, in one-letter code: Alanine--tRNA ligase (874 aa).

Zn(2+) is bound by residues histidine 563, histidine 567, cysteine 665, and histidine 669.

This sequence belongs to the class-II aminoacyl-tRNA synthetase family. It depends on Zn(2+) as a cofactor.

The protein resides in the cytoplasm. The enzyme catalyses tRNA(Ala) + L-alanine + ATP = L-alanyl-tRNA(Ala) + AMP + diphosphate. Its function is as follows. Catalyzes the attachment of alanine to tRNA(Ala) in a two-step reaction: alanine is first activated by ATP to form Ala-AMP and then transferred to the acceptor end of tRNA(Ala). Also edits incorrectly charged Ser-tRNA(Ala) and Gly-tRNA(Ala) via its editing domain. In Aeromonas salmonicida (strain A449), this protein is Alanine--tRNA ligase.